A 372-amino-acid polypeptide reads, in one-letter code: Glutamate 5-kinase (372 aa).

Lys14 provides a ligand contact to ATP. Substrate contacts are provided by Ser54, Asp141, and Asn153. 173 to 174 (TD) is an ATP binding site. The PUA domain maps to 280 to 358 (AGRIVLDQGA…TDILSILGFV (79 aa)).

The protein belongs to the glutamate 5-kinase family.

The protein localises to the cytoplasm. The catalysed reaction is L-glutamate + ATP = L-glutamyl 5-phosphate + ADP. Its pathway is amino-acid biosynthesis; L-proline biosynthesis; L-glutamate 5-semialdehyde from L-glutamate: step 1/2. Catalyzes the transfer of a phosphate group to glutamate to form L-glutamate 5-phosphate. This is Glutamate 5-kinase from Herminiimonas arsenicoxydans.